The chain runs to 335 residues: MAITIGINGFGRIGRLVLRIALQRSDIKVVAVNDPFIAPEYAAYMFKYDSTHGRYKGEVTSKDDSLVIDGQSIKVFGEKDPASIPWGKAGVDYVIESTGVFTTTEGAQKHIDGGAKKVIITAPSSDAPMFVVGVNEQKYTPDLKIVSNASCTTNCLAPLAKVINDKFGIEEGLMTTVHSITATQKTVDGPSHKDWRGGRTASGNIIPSSTGAAKAVGKVIPELNGKLTGMSLRVPTVDVSVVDLTVRLKKSATYEEISEAIKAASNGELKGILGYTEDAVVSTDFLGSDYSSIFDQKAGILLSPTFVKLISWYDNEFGYSTRVVDLLEHVAKASN.

NAD(+) contacts are provided by residues 12-13, Asp-34, and Lys-79; that span reads RI. D-glyceraldehyde 3-phosphate contacts are provided by residues 150–152, Thr-181, 210–211, and Arg-233; these read SCT and TG. Cys-151 serves as the catalytic Nucleophile. Position 315 (Asn-315) interacts with NAD(+).

The protein belongs to the glyceraldehyde-3-phosphate dehydrogenase family. In terms of assembly, homotetramer.

It is found in the cytoplasm. The enzyme catalyses D-glyceraldehyde 3-phosphate + phosphate + NAD(+) = (2R)-3-phospho-glyceroyl phosphate + NADH + H(+). It functions in the pathway carbohydrate degradation; glycolysis; pyruvate from D-glyceraldehyde 3-phosphate: step 1/5. The chain is Glyceraldehyde-3-phosphate dehydrogenase (GPD) from Debaryomyces hansenii (strain ATCC 36239 / CBS 767 / BCRC 21394 / JCM 1990 / NBRC 0083 / IGC 2968) (Yeast).